We begin with the raw amino-acid sequence, 1133 residues long: Fas-binding factor 1 (1133 aa).

Disordered stretches follow at residues 89–198 and 211–544; these read LGLK…TPIR and IMAT…VPVQ. Positions 102-113 are enriched in basic and acidic residues; that stretch reads AAKDPGKGELPN. Low complexity predominate over residues 125 to 134; the sequence is KKSLPSPSSS. The residue at position 142 (Ser142) is a Phosphoserine. Polar residues predominate over residues 165–182; that stretch reads PPVTQSKTASDKSPSTVR. Composition is skewed to basic and acidic residues over residues 221-245 and 259-276; these read PKAE…DELL and TGEH…RPQD. A compositionally biased stretch (acidic residues) spans 277-286; the sequence is SEDMWGDEDF. Over residues 295–310 the composition is skewed to low complexity; it reads VVSSEGRQSRRQSVSR. Polar residues predominate over residues 325 to 336; it reads SKQSPPMASSPI. Basic and acidic residues predominate over residues 415–424; that stretch reads ASKEEKEDWL. Residues 459–469 show a composition bias toward polar residues; the sequence is SGSQPLTSTQG. Residues 473-482 are compositionally biased toward low complexity; it reads AAAGGSSGTT. 2 coiled-coil regions span residues 577 to 727 and 773 to 870; these read AELQ…VDAA and IRQR…EEQK. Lys960 is covalently cross-linked (Glycyl lysine isopeptide (Lys-Gly) (interchain with G-Cter in SUMO2)). Positions 1062–1085 are disordered; that stretch reads AASSQSALMPPAPTTRWCSQPPTG.

In terms of assembly, may interact with FAS cytoplasmic domain. Interacts with PARD3. Interacts with TRAPPC14. As to expression, present in various epithelial cells (at protein level).

It localises to the cytoplasm. Its subcellular location is the cytoskeleton. It is found in the microtubule organizing center. The protein localises to the centrosome. The protein resides in the centriole. It localises to the spindle pole. Its subcellular location is the cell junction. Its function is as follows. Keratin-binding protein required for epithelial cell polarization. Involved in apical junction complex (AJC) assembly via its interaction with PARD3. Required for ciliogenesis. This chain is Fas-binding factor 1 (FBF1), found in Homo sapiens (Human).